Consider the following 327-residue polypeptide: Complex I intermediate-associated protein 30, mitochondrial (327 aa).

A mitochondrion-targeting transit peptide spans 1–24 (MALVHKLLRGTYFLRKFSKPTSAL). Residues 42-63 (PVASPGKASSQRKTEGDLQGDH) are disordered. Residues 53–63 (RKTEGDLQGDH) are compositionally biased toward basic and acidic residues. Residue serine 318 is modified to Phosphoserine.

It belongs to the CIA30 family. In terms of assembly, part of the mitochondrial complex I assembly/MCIA complex that comprises at least the core subunits TMEM126B, NDUFAF1, ECSIT and ACAD9 and complement subunits such as COA1 and TMEM186. Interacts with ECSIT. Interacts with ACAD9. At early stages of complex I assembly, it is found in intermediate subcomplexes that contain different subunits including NDUFB6, NDUFA6, NDUFA9, NDUFS3, NDUFS7, ND1, ND2 and ND3. Interacts with TMEM70 and TMEM242. In terms of tissue distribution, ubiquitous.

It localises to the mitochondrion. The protein resides in the mitochondrion matrix. In terms of biological role, as part of the MCIA complex, involved in the assembly of the mitochondrial complex I. This is Complex I intermediate-associated protein 30, mitochondrial from Homo sapiens (Human).